Consider the following 358-residue polypeptide: Uroporphyrinogen decarboxylase (358 aa).

Substrate is bound by residues 27–31, Asp77, Tyr154, Ser209, and His327; that span reads RQAGR.

Belongs to the uroporphyrinogen decarboxylase family. Homodimer.

It localises to the cytoplasm. The catalysed reaction is uroporphyrinogen III + 4 H(+) = coproporphyrinogen III + 4 CO2. The protein operates within porphyrin-containing compound metabolism; protoporphyrin-IX biosynthesis; coproporphyrinogen-III from 5-aminolevulinate: step 4/4. Catalyzes the decarboxylation of four acetate groups of uroporphyrinogen-III to yield coproporphyrinogen-III. The sequence is that of Uroporphyrinogen decarboxylase from Azoarcus sp. (strain BH72).